The primary structure comprises 149 residues: SsrA-binding protein (149 aa).

The protein belongs to the SmpB family.

Its subcellular location is the cytoplasm. Its function is as follows. Required for rescue of stalled ribosomes mediated by trans-translation. Binds to transfer-messenger RNA (tmRNA), required for stable association of tmRNA with ribosomes. tmRNA and SmpB together mimic tRNA shape, replacing the anticodon stem-loop with SmpB. tmRNA is encoded by the ssrA gene; the 2 termini fold to resemble tRNA(Ala) and it encodes a 'tag peptide', a short internal open reading frame. During trans-translation Ala-aminoacylated tmRNA acts like a tRNA, entering the A-site of stalled ribosomes, displacing the stalled mRNA. The ribosome then switches to translate the ORF on the tmRNA; the nascent peptide is terminated with the 'tag peptide' encoded by the tmRNA and targeted for degradation. The ribosome is freed to recommence translation, which seems to be the essential function of trans-translation. This Anaplasma phagocytophilum (strain HZ) protein is SsrA-binding protein.